A 293-amino-acid chain; its full sequence is Exosome complex component RRP4 (293 aa).

Positions 79–159 (EVGDIVVGRI…SDGAVSLHTR (81 aa)) constitute an S1 motif domain. Phosphoserine is present on Ser-124.

The protein belongs to the RRP4 family. Component of the RNA exosome core complex (Exo-9), composed of EXOSC1, EXOSC2, EXOSC3, EXOSC4, EXOSC5, EXOSC6, EXOSC7, EXOSC8 and EXOSC9; within the complex interacts with EXOSC4 and EXOSC7. The catalytically inactive RNA exosome core complex (Exo-9) associates with the catalytic subunit EXOSC10/RRP6. Exo-9 may associate with DIS3 to form the nucleolar exosome complex, or DIS3L to form the cytoplasmic exosome complex. Exo-9 is formed by a hexameric base ring consisting of the heterodimers EXOSC4-EXOSC9, EXOSC5-EXOSC8 and EXOSC6-EXOSC7, and a cap ring consisting of EXOSC1, EXOSC2 and EXOSC3. The RNA exosome complex associates with cofactors C1D/RRP47, MPHOSPH6/MPP6 and MTREX/MTR4. Interacts with GTPBP1. Interacts with ZFP36L1 (via N-terminus).

It localises to the cytoplasm. The protein resides in the nucleus. It is found in the nucleolus. Functionally, non-catalytic component of the RNA exosome complex which has 3'-&gt;5' exoribonuclease activity and participates in a multitude of cellular RNA processing and degradation events. In the nucleus, the RNA exosome complex is involved in proper maturation of stable RNA species such as rRNA, snRNA and snoRNA, in the elimination of RNA processing by-products and non-coding 'pervasive' transcripts, such as antisense RNA species and promoter-upstream transcripts (PROMPTs), and of mRNAs with processing defects, thereby limiting or excluding their export to the cytoplasm. The RNA exosome may be involved in Ig class switch recombination (CSR) and/or Ig variable region somatic hypermutation (SHM) by targeting AICDA deamination activity to transcribed dsDNA substrates. In the cytoplasm, the RNA exosome complex is involved in general mRNA turnover and specifically degrades inherently unstable mRNAs containing AU-rich elements (AREs) within their 3' untranslated regions, and in RNA surveillance pathways, preventing translation of aberrant mRNAs. It seems to be involved in degradation of histone mRNA. The catalytic inactive RNA exosome core complex of 9 subunits (Exo-9) is proposed to play a pivotal role in the binding and presentation of RNA for ribonucleolysis, and to serve as a scaffold for the association with catalytic subunits and accessory proteins or complexes. EXOSC2 as peripheral part of the Exo-9 complex stabilizes the hexameric ring of RNase PH-domain subunits through contacts with EXOSC4 and EXOSC7. This chain is Exosome complex component RRP4 (EXOSC2), found in Bos taurus (Bovine).